The sequence spans 232 residues: Small ribosomal subunit protein uS3 (232 aa).

Residues valine 39–arginine 107 enclose the KH type-2 domain.

It belongs to the universal ribosomal protein uS3 family. As to quaternary structure, part of the 30S ribosomal subunit. Forms a tight complex with proteins S10 and S14.

In terms of biological role, binds the lower part of the 30S subunit head. Binds mRNA in the 70S ribosome, positioning it for translation. This Erwinia tasmaniensis (strain DSM 17950 / CFBP 7177 / CIP 109463 / NCPPB 4357 / Et1/99) protein is Small ribosomal subunit protein uS3.